Consider the following 208-residue polypeptide: ATP-dependent Clp protease proteolytic subunit (208 aa).

The active-site Nucleophile is serine 105. Residue histidine 130 is part of the active site.

This sequence belongs to the peptidase S14 family. As to quaternary structure, fourteen ClpP subunits assemble into 2 heptameric rings which stack back to back to give a disk-like structure with a central cavity, resembling the structure of eukaryotic proteasomes.

It is found in the cytoplasm. The enzyme catalyses Hydrolysis of proteins to small peptides in the presence of ATP and magnesium. alpha-casein is the usual test substrate. In the absence of ATP, only oligopeptides shorter than five residues are hydrolyzed (such as succinyl-Leu-Tyr-|-NHMec, and Leu-Tyr-Leu-|-Tyr-Trp, in which cleavage of the -Tyr-|-Leu- and -Tyr-|-Trp bonds also occurs).. In terms of biological role, cleaves peptides in various proteins in a process that requires ATP hydrolysis. Has a chymotrypsin-like activity. Plays a major role in the degradation of misfolded proteins. The protein is ATP-dependent Clp protease proteolytic subunit of Xanthomonas axonopodis pv. citri (strain 306).